A 517-amino-acid polypeptide reads, in one-letter code: GMP synthase [glutamine-hydrolyzing] (517 aa).

Positions 11 to 202 (KIIALDFGSQ…AFDVCGAKAN (192 aa)) constitute a Glutamine amidotransferase type-1 domain. Cys88 acts as the Nucleophile in catalysis. Residues His176 and Glu178 contribute to the active site. The region spanning 203–392 (WTMDDFIDMQ…LGIPHELVWR (190 aa)) is the GMPS ATP-PPase domain. 230–236 (SGGVDSS) is an ATP binding site.

As to quaternary structure, homodimer.

The catalysed reaction is XMP + L-glutamine + ATP + H2O = GMP + L-glutamate + AMP + diphosphate + 2 H(+). It functions in the pathway purine metabolism; GMP biosynthesis; GMP from XMP (L-Gln route): step 1/1. Its function is as follows. Catalyzes the synthesis of GMP from XMP. This Limosilactobacillus reuteri (strain DSM 20016) (Lactobacillus reuteri) protein is GMP synthase [glutamine-hydrolyzing].